We begin with the raw amino-acid sequence, 186 residues long: ADP-ribosylation factor-like protein 8 (186 aa).

The note=Mediates targeting to membranes intramembrane region spans 1–19; that stretch reads MLALINRILEWFKSIFWKE. Residues 29 to 35, 71 to 75, and 130 to 133 each bind GTP; these read QFSGKTT, DIGGQ, and NKRD.

This sequence belongs to the small GTPase superfamily. Arf family. In terms of assembly, interacts with tubulin. Interacts (in GTP-bound form) with Rilpl. Interacts with unc-104. As to expression, expressed throughout development, from embryo to adult stage, in different tissues such as larval motor neurons, salivary glands, testis and ovaries (at protein level).

The protein localises to the lysosome membrane. Its subcellular location is the synapse. The protein resides in the cell projection. It is found in the axon. It localises to the perikaryon. In terms of biological role, required for normal functioning of the late endocytic pathway including lysosome motility and late endosome-lysosome fusion. Not required for the delivery of lysosomal membrane protein-containing vesicles to late endosomes. In larval motor neurons, mediates the anterograde axonal long-range transport of presynaptic lysosome-related vesicles required for presynaptic biogenesis and synaptic function. Acts downstream of Rab2 during presynaptic precursor vesicle biogenesis. Essential role in chromosome segregation. The sequence is that of ADP-ribosylation factor-like protein 8 from Drosophila melanogaster (Fruit fly).